A 325-amino-acid chain; its full sequence is uncharacterized protein (325 aa).

A signal peptide spans 1–26; the sequence is MQGRVAGSCAPLGLLLVCLHLPGLFA. The segment covering 41-60 has biased composition (polar residues); the sequence is GTNLPQLGQPSSTGPSNSEH. Disordered stretches follow at residues 41–110 and 147–189; these read GTNL…MDSW and GSGP…AGGK. A compositionally biased stretch (low complexity) spans 147-157; the sequence is GSGPLPGESSP.

Binds to numerous extracellular matrix proteins. In terms of tissue distribution, expressed in skin and tonsils.

The protein resides in the secreted. Its subcellular location is the extracellular space. It localises to the extracellular matrix. This is an uncharacterized protein from Homo sapiens (Human).